Reading from the N-terminus, the 145-residue chain is 3-hydroxyacyl-[acyl-carrier-protein] dehydratase FabZ (145 aa).

Histidine 48 is a catalytic residue.

This sequence belongs to the thioester dehydratase family. FabZ subfamily.

The protein localises to the cytoplasm. It catalyses the reaction a (3R)-hydroxyacyl-[ACP] = a (2E)-enoyl-[ACP] + H2O. Involved in unsaturated fatty acids biosynthesis. Catalyzes the dehydration of short chain beta-hydroxyacyl-ACPs and long chain saturated and unsaturated beta-hydroxyacyl-ACPs. The sequence is that of 3-hydroxyacyl-[acyl-carrier-protein] dehydratase FabZ from Marinobacter nauticus (strain ATCC 700491 / DSM 11845 / VT8) (Marinobacter aquaeolei).